Here is a 47-residue protein sequence, read N- to C-terminus: Laccase-2d (47 aa).

Residues T2–F47 enclose the Plastocyanin-like domain.

It belongs to the multicopper oxidase family. In terms of assembly, homodimer. It depends on Cu cation as a cofactor. In terms of processing, N-glycosylated; contains 17% carbohydrates.

The protein localises to the secreted. The catalysed reaction is 4 hydroquinone + O2 = 4 benzosemiquinone + 2 H2O. Its activity is regulated as follows. Inhibited by sodium azide, SDS and mercaptoethanol, but not by 4-hexyl resocinol, L-cysteine and dithiothreitol. Activity is inhibited by the heavy metal ions Cr, W, Sn, Ag(+) and Hg(2+), but not by Pb(2+), Fe(3+), Ni(2+), Li(2+), Co(2+) or Cd(2+). Functionally, lignin degradation and detoxification of lignin-derived products. Has highest activity towards ABTS, also active towards ferulic acid and guaiacol, but is not active towards tyrosine, vanillic acid, 2,5-dimethyl aniline, p-anisidine or violuric acid. This chain is Laccase-2d, found in Cerrena unicolor (Canker rot fungus).